A 41-amino-acid chain; its full sequence is Photosystem II reaction center protein Y (41 aa).

Residues 4-22 (LIVVVLPILAAVTWVVFNI) traverse the membrane as a helical segment.

The protein belongs to the PsbY family. In terms of assembly, PSII is composed of 1 copy each of membrane proteins PsbA, PsbB, PsbC, PsbD, PsbE, PsbF, PsbH, PsbI, PsbJ, PsbK, PsbL, PsbM, PsbT, PsbX, PsbY, Psb30/Ycf12, peripheral proteins PsbO, CyanoQ (PsbQ), PsbU, PsbV and a large number of cofactors. It forms dimeric complexes.

Its subcellular location is the cellular thylakoid membrane. In terms of biological role, loosely associated component of the core of photosystem II (PSII), it is not always seen in crystals. PSII is a light-driven water plastoquinone oxidoreductase, using light energy to abstract electrons from H(2)O, generating a proton gradient subsequently used for ATP formation. The chain is Photosystem II reaction center protein Y from Prochlorococcus marinus (strain MIT 9211).